The chain runs to 55 residues: Large ribosomal subunit protein bL33 (55 aa).

It belongs to the bacterial ribosomal protein bL33 family.

This Hyphomonas neptunium (strain ATCC 15444) protein is Large ribosomal subunit protein bL33.